The following is a 129-amino-acid chain: Small ribosomal subunit protein uS11 (129 aa).

This sequence belongs to the universal ribosomal protein uS11 family. As to quaternary structure, part of the 30S ribosomal subunit. Interacts with proteins S7 and S18. Binds to IF-3.

Located on the platform of the 30S subunit, it bridges several disparate RNA helices of the 16S rRNA. Forms part of the Shine-Dalgarno cleft in the 70S ribosome. This is Small ribosomal subunit protein uS11 from Desulfitobacterium hafniense (strain DSM 10664 / DCB-2).